The chain runs to 132 residues: Small ribosomal subunit protein uS8 (132 aa).

Belongs to the universal ribosomal protein uS8 family. In terms of assembly, part of the 30S ribosomal subunit. Contacts proteins S5 and S12.

One of the primary rRNA binding proteins, it binds directly to 16S rRNA central domain where it helps coordinate assembly of the platform of the 30S subunit. The sequence is that of Small ribosomal subunit protein uS8 from Corynebacterium jeikeium (strain K411).